Consider the following 767-residue polypeptide: Protein NLP3 (767 aa).

Disordered stretches follow at residues 462-494 (ATPP…RKTK), 590-622 (INPT…CSSE), and 646-672 (HEDQ…KAKD). The region spanning 482-566 (SASSLENRKR…MDSVEGVQGS (85 aa)) is the RWP-RK domain. Residues 485–506 (SLENRKRKTKAEKDITLDTLRQ) are a coiled coil. Low complexity-rich tracts occupy residues 604–622 (PSSS…CSSE) and 655–667 (TSSL…ATTP). The 87-residue stretch at 673–759 (GMKVKAMFGD…ETIRILVHHP (87 aa)) folds into the PB1 domain.

It localises to the nucleus. Functionally, probable transcription factor. In Arabidopsis thaliana (Mouse-ear cress), this protein is Protein NLP3 (NLP3).